Consider the following 154-residue polypeptide: Ribosome maturation factor RimP (154 aa).

It belongs to the RimP family.

It localises to the cytoplasm. Its function is as follows. Required for maturation of 30S ribosomal subunits. The chain is Ribosome maturation factor RimP from Salmonella gallinarum (strain 287/91 / NCTC 13346).